A 3931-amino-acid polypeptide reads, in one-letter code: Replicase polyprotein 1ab (3931 aa).

The C4-type; atypical zinc finger occupies 8 to 28 (CTCTPNARVFVAEGQVYCTRC). Positions 69-182 (ECSPAGACWL…FCPFECAMAD (114 aa)) are PCP1-alpha. Catalysis depends on for nsp1-alpha papain-like cysteine proteinase activity residues Cys-76 and His-146. An important for host EIF2AK2 inhibition region spans residues 199-200 (VS). Residues Cys-270 and His-339 each act as for nsp1-beta papain-like cysteine proteinase activity in the active site. The interval 426–513 (LKRYSPPAEG…GEHWTVSVIP (88 aa)) is OTU-like. A Peptidase C33 domain is found at 428 to 536 (RYSPPAEGNC…GCCEHKGGLV (109 aa)). Active-site for nsp2 cysteine proteinase activity residues include Cys-437 and His-506. Disordered stretches follow at residues 809–868 (RWTP…VGGP) and 1118–1164 (TDEL…TGGV). A compositionally biased stretch (pro residues) spans 810-819 (WTPPPPPPRV). A compositionally biased stretch (basic and acidic residues) spans 1139 to 1151 (PAKDPRMSPRESD). 3 helical membrane passes run 1221 to 1241 (SGYSPGDWGFAAFTLFCLFLC), 1266 to 1286 (GVFGCWLAFAVGLFKPVSDPV), and 1339 to 1359 (WHFLLRLGIVADCILAGAYVL). The tract at residues 1236–1359 (FCLFLCYSYP…DCILAGAYVL (124 aa)) is HD1. The tract at residues 1414-1438 (TGWRGCWTGRSPIEQPSEKPIAFAQ) is WCCH. 5 consecutive transmembrane segments (helical) span residues 1554–1574 (IAALHVACSMALHMLAGVYVT), 1607–1627 (LCISQHGLTLPLTALVAGFGL), 1629–1649 (EIALVVLIFVSIGGMAHRLSC), 1659–1679 (AIASYVWVPLTWLLCVFPCWL), and 1695–1715 (FLISVNIPSGILAVVLLVSLW). The HD2 stretch occupies residues 1554 to 1715 (IAALHVACSM…LAVVLLVSLW (162 aa)). Residues His-1818, Asp-1843, and Ser-1897 each act as charge relay system; for serine protease nsp4 activity in the active site. 4 consecutive transmembrane segments (helical) span residues 2006-2026 (WTPLVAVGFFILNEILPAVLV), 2030-2050 (FSFGMFVLSWLTPWSAQVLMI), 2064-2084 (LGFYSLGAVTSFVADLAVTQG), and 2107-2127 (SPVPVIACGVVHLLAIILYLF). The HD3 stretch occupies residues 2006–2127 (WTPLVAVGFF…HLLAIILYLF (122 aa)).

The protein belongs to the arteriviridae polyprotein family. As to quaternary structure, nsp1-alpha papain-like: Interacts with host RNF31. Interacts with host EIF2AK2; this interaction occurs in host stress granules and leads to EIF2AK2 inhibition. Interacts with host G3BP1; this interaction probably plays a role in Nsp1-beta-mediated inhibition of host EIF2AK2. In terms of assembly, interacts with host DDX18; this interaction redistributes host DDX18 to the cytoplasm. As to quaternary structure, interacts with host IFITM1. Interacts with host DDX5. In terms of assembly, interacts with host OTULIN. As to quaternary structure, interacts with host LGALS3. Specific enzymatic cleavages in vivo by its own proteases yield mature proteins. Nsp1 is autocleaved into two subunits, Nsp1-alpha and Nsp1-beta. There are two alternative pathways for processing. Either nsp4-5 is cleaved, which represents the major pathway or the nsp5-6 and nsp6-7 are processed, which represents the minor pathway. The major pathway occurs when nsp2 acts as a cofactor for nsp4.

Its subcellular location is the host nucleus. The protein localises to the host cytoplasm. The protein resides in the host membrane. It localises to the host endoplasmic reticulum. It is found in the host perinuclear region. It catalyses the reaction RNA(n) + a ribonucleoside 5'-triphosphate = RNA(n+1) + diphosphate. The catalysed reaction is ATP + H2O = ADP + phosphate + H(+). The enzyme catalyses Thiol-dependent hydrolysis of ester, thioester, amide, peptide and isopeptide bonds formed by the C-terminal Gly of ubiquitin (a 76-residue protein attached to proteins as an intracellular targeting signal).. It carries out the reaction uridylyl-uridylyl-ribonucleotide-RNA = a 3'-end uridylyl-2',3'-cyclophospho-uridine-RNA + a 5'-end dephospho-ribonucleoside-RNA. Contains the activities necessary for the transcription of negative stranded RNA, leader RNA, subgenomic mRNAs and progeny virion RNA as well as proteinases responsible for the cleavage of the polyprotein into functional products. In terms of biological role, inhibits host IFN-beta production. Plays a role in the degradation of the host transcriptional activator CREBBP protein. The degradation of host CREBBP which is a key component of the IFN enhanceosome is likely responsible for the inhibition of interferon mediated by Nsp1-alpha. Also participates in the inhibition of host NF-kappa-B activation by counteracting LUBAC-dependent induction of NF-kappa-B. Reduces host NEMO ubiquitination by blocking the interaction between the two LUBAC complex components RNF31 and SHARPIN. Its function is as follows. Plays a role in blocking host mRNA nuclear export to the cytoplasm and subversion of host protein synthesis. Additionally, inhibits the interferon-activated JAK/STAT signal transduction by mediating the ubiquitination and subsequent proteasomal degradation of host KPNA1. Repurposes the host antiviral stress granules into a proviral platform to counteract the EIF2AK2/PKR restriction, thereby regulating the host inflammatory response. Functionally, multifunctional protein that acts as a viral protease and as a viral antagonist of host immune response. Cleaves the nsp2/nsp3 site in the viral polyprotein. Displays deubiquitinating activity that cleaves both ubiquitinated and ISGylated products and therefore inhibits ubiquitin and ISG15-dependent host innate immunity. Also deubiquinates host NFKBIA, thereby interfering with NFKBIA degradation and impairing subsequent NF-kappa-B activation. Plays a role in the inhibition of the immune response by interacting with host IFITM1. This interaction leads to the proteasomal degradation of the IFN-induced antiviral protein IFITM1. In terms of biological role, cleaves the majority of cleavage sites present in the C-terminus of the polyprotein. Triggers host apoptosis through caspase-3, -8, and -9 activations. Subverts host innate immune responses through its protease activity. Targets the NF-kappa-B essential modulator NEMO and mediates its cleavage. Blocks host interferon beta induction and downstream signaling by cleaving mitochondrial MAVS, dislodging it from the mitochondria. Impairs host defense by cleaving host mRNA-decapping enzyme DCP1A to attenuate its antiviral activity. Its function is as follows. Plays a role in the initial induction of autophagosomes from host endoplasmic reticulum. Functionally, plays a role in the inhibition of host STAT3 signaling pathway by inducing the degradation of STAT3. Responsible for replication and transcription of the viral RNA genome. In terms of biological role, displays RNA and DNA duplex-unwinding activities with 5' to 3' polarity. Its function is as follows. Plays a role in viral transcription/replication and prevents the simultaneous activation of host cell dsRNA sensors, such as MDA5/IFIH1, OAS, PKR and NLRP3 inflammasome. Acts by degrading the 5'-polyuridines generated during replication of the poly(A) region of viral genomic and subgenomic RNAs. Catalyzes a two-step reaction in which a 2'3'-cyclic phosphate (2'3'-cP) is first generated by 2'-O transesterification, which is then hydrolyzed to a 3'-phosphate (3'-P). If not degraded, poly(U) RNA would hybridize with poly(A) RNA tails and activate host dsRNA sensors. Also plays a role in the inhibition of host type I interferon production by recruiting host OTULIN to promote removal of linear ubiquitination targeting host NEMO. The polypeptide is Replicase polyprotein 1ab (Porcine reproductive and respiratory syndrome virus (PRRSV)).